The primary structure comprises 637 residues: Chaperone protein DnaK (637 aa).

Thr-198 carries the phosphothreonine; by autocatalysis modification. The disordered stretch occupies residues 597–637; the sequence is MYAKTSQAGAGPQPGAGPGTGGQGPGKKDEDVVDADFEEVK. Residues 608-621 are compositionally biased toward gly residues; it reads PQPGAGPGTGGQGP. The segment covering 627 to 637 has biased composition (acidic residues); the sequence is DVVDADFEEVK.

Belongs to the heat shock protein 70 family.

Its function is as follows. Acts as a chaperone. The sequence is that of Chaperone protein DnaK from Syntrophus aciditrophicus (strain SB).